The primary structure comprises 265 residues: Cell division protein DivIB (265 aa).

At 1–33 the chain is on the cytoplasmic side; it reads MRMELKMMGNVNKSNKTNEYILRRHKKKRKKKL. Residues 34 to 54 traverse the membrane as a helical segment; the sequence is IIFSILLISILVTLCFKHPFF. The region spanning 54-122 is the POTRA domain; that stretch reads FNVKIVEVKD…NKIVIHIKER (69 aa). Topologically, residues 55–265 are extracellular; the sequence is NVKIVEVKDN…FKGNPVVFIK (211 aa).

Belongs to the FtsQ/DivIB family. DivIB subfamily.

It is found in the cell membrane. Its function is as follows. Cell division protein that may be involved in stabilizing or promoting the assembly of the division complex. The protein is Cell division protein DivIB of Clostridium tetani (strain Massachusetts / E88).